Reading from the N-terminus, the 471-residue chain is Ribulose bisphosphate carboxylase large chain (471 aa).

Substrate-binding residues include Asn-115 and Thr-165. Lys-167 (proton acceptor) is an active-site residue. Position 169 (Lys-169) interacts with substrate. Mg(2+) contacts are provided by Lys-193, Asp-195, and Glu-196. N6-carboxylysine is present on Lys-193. The active-site Proton acceptor is the His-286. Positions 287, 319, and 371 each coordinate substrate.

The protein belongs to the RuBisCO large chain family. Type I subfamily. As to quaternary structure, heterohexadecamer of 8 large chains and 8 small chains. Forms a CsoS2-CsoS1-RuBisCO complex. It depends on Mg(2+) as a cofactor.

Its subcellular location is the carboxysome. The catalysed reaction is 2 (2R)-3-phosphoglycerate + 2 H(+) = D-ribulose 1,5-bisphosphate + CO2 + H2O. The enzyme catalyses D-ribulose 1,5-bisphosphate + O2 = 2-phosphoglycolate + (2R)-3-phosphoglycerate + 2 H(+). Its function is as follows. RuBisCO catalyzes two reactions: the carboxylation of D-ribulose 1,5-bisphosphate, the primary event in carbon dioxide fixation, as well as the oxidative fragmentation of the pentose substrate in the photorespiration process. Both reactions occur simultaneously and in competition at the same active site. This chain is Ribulose bisphosphate carboxylase large chain, found in Parasynechococcus marenigrum (strain WH8102).